A 270-amino-acid chain; its full sequence is Secreted RxLR effector protein 149 (270 aa).

The first 21 residues, 1–21, serve as a signal peptide directing secretion; that stretch reads MRNGVVLFGLFFIGYSSCVLA. Residues 43 to 58 carry the RxLR-dEER motif; sequence RTLQADDPERILAEER.

The protein belongs to the RxLR effector family.

Its subcellular location is the secreted. The protein resides in the host nucleus. The protein localises to the host cytoplasm. In terms of biological role, secreted effector that completely suppresses the host cell death induced by cell death-inducing proteins. This chain is Secreted RxLR effector protein 149, found in Plasmopara viticola (Downy mildew of grapevine).